The sequence spans 146 residues: Ataxin-7-like protein 1 (146 aa).

Disordered regions lie at residues 1–27 (MTSE…QEGT) and 125–146 (KRNA…QRQV). A compositionally biased stretch (polar residues) spans 127-138 (NASISWSGAESR).

This Mus musculus (Mouse) protein is Ataxin-7-like protein 1 (Atxn7l1).